A 257-amino-acid chain; its full sequence is Transmembrane protein 101 (257 aa).

Helical transmembrane passes span 24–40 (TRCP…LYAE), 52–72 (VPYL…MSFG), 77–97 (WFAL…YIGG), 110–130 (YSRT…AGEL), 139–159 (SLQS…AYSL), 182–202 (LFFV…YVTL), 206–226 (ILAV…SYWH), and 233–253 (FWNQ…AVIL).

The protein localises to the membrane. Functionally, may activate NF-kappa-B signaling pathways. This is Transmembrane protein 101 (Tmem101) from Mus musculus (Mouse).